Here is a 201-residue protein sequence, read N- to C-terminus: MSANVQEAANAAIEPASFVKVPMPEPPSSLQQLINDWQLIKHREGGYFKETDRSPYTMEVEKPVNGGSGNTEMVTRNQSTLIYYLLTPDSPIGKFHKNINRIIHILQRGKGQYVLVYPDGQVKSFKVGFDYKNGEVSQWVVPGGVFKASFLLPNEEFDNGFLISEVVVPGFDFEDHTFLKGEDELKHLVGPEKAAELAFLA.

This is an uncharacterized protein from Saccharomyces cerevisiae (strain ATCC 204508 / S288c) (Baker's yeast).